Here is a 383-residue protein sequence, read N- to C-terminus: tRNA-specific 2-thiouridylase MnmA (383 aa).

ATP is bound by residues 9–16 and Met35; that span reads GMSGGVDS. An interaction with target base in tRNA region spans residues 95–97; the sequence is NPD. Cys100 functions as the Nucleophile in the catalytic mechanism. A disulfide bridge connects residues Cys100 and Cys196. Gly124 contributes to the ATP binding site. The tract at residues 146 to 148 is interaction with tRNA; it reads KDQ. The active-site Cysteine persulfide intermediate is the Cys196. The segment at 308–309 is interaction with tRNA; the sequence is RY.

This sequence belongs to the MnmA/TRMU family.

The protein resides in the cytoplasm. It catalyses the reaction S-sulfanyl-L-cysteinyl-[protein] + uridine(34) in tRNA + AH2 + ATP = 2-thiouridine(34) in tRNA + L-cysteinyl-[protein] + A + AMP + diphosphate + H(+). Its function is as follows. Catalyzes the 2-thiolation of uridine at the wobble position (U34) of tRNA, leading to the formation of s(2)U34. The protein is tRNA-specific 2-thiouridylase MnmA of Burkholderia lata (strain ATCC 17760 / DSM 23089 / LMG 22485 / NCIMB 9086 / R18194 / 383).